Here is a 1190-residue protein sequence, read N- to C-terminus: Pyruvate-flavodoxin oxidoreductase (1190 aa).

4Fe-4S ferredoxin-type domains lie at 687 to 716 (EIPV…SKVY) and 743 to 773 (FTIQ…PRKK). [4Fe-4S] cluster contacts are provided by C696, C699, C702, C706, C752, C755, C758, C762, C826, C829, C854, and C1089.

It belongs to the pyruvate:ferredoxin/flavodoxin oxidoreductase family. The cofactor is [4Fe-4S] cluster.

It catalyses the reaction oxidized [flavodoxin] + pyruvate + CoA + 2 H(+) = reduced [flavodoxin] + acetyl-CoA + CO2. In terms of biological role, oxidoreductase required for the transfer of electrons from pyruvate to flavodoxin, which reduces nitrogenase. The protein is Pyruvate-flavodoxin oxidoreductase (nifJ) of Trichormus variabilis (strain ATCC 29413 / PCC 7937) (Anabaena variabilis).